The chain runs to 389 residues: Adenylyltransferase and sulfurtransferase uba4 (389 aa).

ATP is bound by residues Gly-40, Asp-61, 68–72 (SNLHR), Lys-85, and 129–130 (DT). Zn(2+)-binding residues include Cys-171 and Cys-174. Residue Cys-188 is the Glycyl thioester intermediate; for adenylyltransferase activity of the active site. Positions 252 and 255 each coordinate Zn(2+). The 90-residue stretch at 298–387 (AQRAPYLVDV…WSRQIDPNFP (90 aa)) folds into the Rhodanese domain. Cys-347 serves as the catalytic Cysteine persulfide intermediate.

This sequence in the N-terminal section; belongs to the HesA/MoeB/ThiF family. UBA4 subfamily. Requires Zn(2+) as cofactor.

Its subcellular location is the cytoplasm. It localises to the cytosol. It catalyses the reaction [molybdopterin-synthase sulfur-carrier protein]-C-terminal Gly-Gly + ATP + H(+) = [molybdopterin-synthase sulfur-carrier protein]-C-terminal Gly-Gly-AMP + diphosphate. The catalysed reaction is [molybdopterin-synthase sulfur-carrier protein]-C-terminal Gly-Gly-AMP + S-sulfanyl-L-cysteinyl-[cysteine desulfurase] + AH2 = [molybdopterin-synthase sulfur-carrier protein]-C-terminal-Gly-aminoethanethioate + L-cysteinyl-[cysteine desulfurase] + A + AMP + 2 H(+). The protein operates within tRNA modification; 5-methoxycarbonylmethyl-2-thiouridine-tRNA biosynthesis. It participates in cofactor biosynthesis; molybdopterin biosynthesis. Its function is as follows. Plays a central role in 2-thiolation of mcm(5)S(2)U at tRNA wobble positions of cytosolic tRNA(Lys), tRNA(Glu) and tRNA(Gln). Also essential during biosynthesis of the molybdenum cofactor. Acts by mediating the C-terminal thiocarboxylation of sulfur carriers URM1 and CNX5/MOCS2A. Its N-terminus first activates urm1 and mocs2a as acyl-adenylates (-COAMP), then the persulfide sulfur on the catalytic cysteine is transferred to URM1 and CNX5/MOCS2A to form thiocarboxylation (-COSH) of their C-terminus. The reaction probably involves hydrogen sulfide that is generated from the persulfide intermediate and that acts as a nucleophile towards URM1 and CNX5/MOCS2A. Subsequently, a transient disulfide bond is formed. Does not use thiosulfate as sulfur donor; NFS1 probably acting as a sulfur donor for thiocarboxylation reactions. Required for growth on nitrate as a sole nitrogen source. In Ogataea parapolymorpha (strain ATCC 26012 / BCRC 20466 / JCM 22074 / NRRL Y-7560 / DL-1) (Yeast), this protein is Adenylyltransferase and sulfurtransferase uba4.